The following is a 336-amino-acid chain: UDP-N-acetylenolpyruvoylglucosamine reductase (336 aa).

The FAD-binding PCMH-type domain occupies 17 to 188 (LRSLAERFVE…WDVTFRLPKK (172 aa)). R164 is a catalytic residue. The active-site Proton donor is the S237. E332 is an active-site residue.

The protein belongs to the MurB family. It depends on FAD as a cofactor.

The protein resides in the cytoplasm. The enzyme catalyses UDP-N-acetyl-alpha-D-muramate + NADP(+) = UDP-N-acetyl-3-O-(1-carboxyvinyl)-alpha-D-glucosamine + NADPH + H(+). Its pathway is cell wall biogenesis; peptidoglycan biosynthesis. Cell wall formation. The chain is UDP-N-acetylenolpyruvoylglucosamine reductase from Bdellovibrio bacteriovorus (strain ATCC 15356 / DSM 50701 / NCIMB 9529 / HD100).